Reading from the N-terminus, the 135-residue chain is Mediator of RNA polymerase II transcription subunit 10 (135 aa).

It belongs to the Mediator complex subunit 10 family. As to quaternary structure, component of the Mediator complex.

It is found in the nucleus. Component of the Mediator complex, a coactivator involved in the regulated transcription of nearly all RNA polymerase II-dependent genes. Mediator functions as a bridge to convey information from gene-specific regulatory proteins to the basal RNA polymerase II transcription machinery. Mediator is recruited to promoters by direct interactions with regulatory proteins and serves as a scaffold for the assembly of a functional preinitiation complex with RNA polymerase II and the general transcription factors. The protein is Mediator of RNA polymerase II transcription subunit 10 (med10) of Xenopus tropicalis (Western clawed frog).